A 316-amino-acid chain; its full sequence is Putative transketolase C-terminal section (316 aa).

This sequence belongs to the transketolase family. Requires thiamine diphosphate as cofactor.

The enzyme catalyses D-sedoheptulose 7-phosphate + D-glyceraldehyde 3-phosphate = aldehydo-D-ribose 5-phosphate + D-xylulose 5-phosphate. This is Putative transketolase C-terminal section from Methanocaldococcus jannaschii (strain ATCC 43067 / DSM 2661 / JAL-1 / JCM 10045 / NBRC 100440) (Methanococcus jannaschii).